Here is a 56-residue protein sequence, read N- to C-terminus: Male determiner protein Yob (56 aa).

In terms of biological role, male determiner protein (M-factor) that controls male somatic sexual differentiation. Acts as a dominant factor that regulates the mRNA splicing of doublesex (dsx) transcripts and promotes expression of male splice forms of dsx. This is Male determiner protein Yob from Anopheles gambiae (African malaria mosquito).